A 341-amino-acid chain; its full sequence is UDP-3-O-acylglucosamine N-acyltransferase (341 aa).

Histidine 240 (proton acceptor) is an active-site residue.

The protein belongs to the transferase hexapeptide repeat family. LpxD subfamily. As to quaternary structure, homotrimer.

The enzyme catalyses a UDP-3-O-[(3R)-3-hydroxyacyl]-alpha-D-glucosamine + a (3R)-hydroxyacyl-[ACP] = a UDP-2-N,3-O-bis[(3R)-3-hydroxyacyl]-alpha-D-glucosamine + holo-[ACP] + H(+). It participates in bacterial outer membrane biogenesis; LPS lipid A biosynthesis. In terms of biological role, catalyzes the N-acylation of UDP-3-O-acylglucosamine using 3-hydroxyacyl-ACP as the acyl donor. Is involved in the biosynthesis of lipid A, a phosphorylated glycolipid that anchors the lipopolysaccharide to the outer membrane of the cell. This chain is UDP-3-O-acylglucosamine N-acyltransferase, found in Cellvibrio japonicus (strain Ueda107) (Pseudomonas fluorescens subsp. cellulosa).